The following is a 197-amino-acid chain: Protein GrpE (197 aa).

Residues 1–27 show a composition bias toward basic and acidic residues; that stretch reads MTKQEKAENQEKPTEETVEETPKKETP. The segment at 1-50 is disordered; it reads MTKQEKAENQEKPTEETVEETPKKETPFEPVMEADEVEETTEAQAPVEEA. Over residues 32 to 41 the composition is skewed to acidic residues; sequence MEADEVEETT.

It belongs to the GrpE family. As to quaternary structure, homodimer.

Its subcellular location is the cytoplasm. In terms of biological role, participates actively in the response to hyperosmotic and heat shock by preventing the aggregation of stress-denatured proteins, in association with DnaK and GrpE. It is the nucleotide exchange factor for DnaK and may function as a thermosensor. Unfolded proteins bind initially to DnaJ; upon interaction with the DnaJ-bound protein, DnaK hydrolyzes its bound ATP, resulting in the formation of a stable complex. GrpE releases ADP from DnaK; ATP binding to DnaK triggers the release of the substrate protein, thus completing the reaction cycle. Several rounds of ATP-dependent interactions between DnaJ, DnaK and GrpE are required for fully efficient folding. The sequence is that of Protein GrpE from Latilactobacillus sakei (Lactobacillus sakei).